We begin with the raw amino-acid sequence, 161 residues long: Small ribosomal subunit protein uS9 (161 aa).

This sequence belongs to the universal ribosomal protein uS9 family.

This chain is Small ribosomal subunit protein uS9, found in Rickettsia felis (strain ATCC VR-1525 / URRWXCal2) (Rickettsia azadi).